The primary structure comprises 535 residues: Cytochrome P450 monooxygenase atE (535 aa).

Cys-455 is a heme binding site.

The protein belongs to the cytochrome P450 family. Heme is required as a cofactor.

It carries out the reaction 3-methylcatechol + AH2 + O2 = 3-methylbenzene-1,2,4-triol + A + H2O. It participates in secondary metabolite biosynthesis. Cytochrome P450 monooxygenase; part of the gene cluster that mediates the biosynthesis of terreic acid, a quinone epoxide inhibitor of Bruton's tyrosine kinase. The first step of the pathway is the synthesis of 6-methylsalicylic acid (6-MSA) by the 6-methylsalicylic acid synthase atX. In the biosynthesis of 6-MSA, atX utilizes one acetyl-CoA and three malonyl-CoAs as its substrates and catalyzes a series of programmed reactions including Claisen condensation, reduction, aldol cyclization, and the hydrolytic cleavage that yields 6-MSA. The 6-methylsalicylate 1-monooxygenase atA then catalyzes the decarboxylative hydroxylation of 6-MSA to 3-methylcatechol. The next step is the conversion of 3-methylcatechol to 3-methyl-1,2,4-benzenetriol by cytochrome P450 monooxygenase atE, which is enhanced by cytochrome P450 monooxygenase atG. Then, the epoxidase atD catalyzes the epoxidation and hydroxyl oxidation of 3-methyl-1,2,4-benzenetriol to terremutin. Lastly, GMC oxidoreductase atC oxidizes terremutin to terreic acid. This chain is Cytochrome P450 monooxygenase atE, found in Aspergillus terreus (strain NIH 2624 / FGSC A1156).